The chain runs to 86 residues: UPF0213 protein OB0043 (86 aa).

Residues 3-80 (EQHYVYILRC…LPRFEKLKLI (78 aa)) enclose the GIY-YIG domain.

It belongs to the UPF0213 family.

In Oceanobacillus iheyensis (strain DSM 14371 / CIP 107618 / JCM 11309 / KCTC 3954 / HTE831), this protein is UPF0213 protein OB0043.